We begin with the raw amino-acid sequence, 362 residues long: MNDYTQQLQGKKDYLKTLFAGLDVPEWEVYESPDKHYRMRAEFRIWHEGGEMFYAMFEKGQKASGASLIRCDRFDAASEAVNCLMPELIAVAAQSAELRNHWYAVEFLSTLSGEMLVTMIYHKRLDDEWMKAAQALQQQLDISVIGRSRGQKIVLKQDYVTETLRVGDRDFHYRQIEGSFTQPNAAVCRKMLEWACRAAEGLGGDLLELYCGNGNFTLPLSRYFRQVLATEISKTSVSAAQWNIEANWIGNIKIARLSAEEFTEAYTGKREFTRLKESGIVLTDYAFSTIFVDPPRAGIDEETLKLVSQFDNIIYISCNPETLRANLDTLTETHTVGRAALFDQFPFTHHIESGVLLKKKIL.

Residues Gln182, Tyr210, Asn215, Glu231, and Asp293 each coordinate S-adenosyl-L-methionine. Cys318 functions as the Nucleophile in the catalytic mechanism. Catalysis depends on Glu352, which acts as the Proton acceptor.

It belongs to the class I-like SAM-binding methyltransferase superfamily. RNA M5U methyltransferase family. TrmA subfamily.

The catalysed reaction is uridine(54) in tRNA + S-adenosyl-L-methionine = 5-methyluridine(54) in tRNA + S-adenosyl-L-homocysteine + H(+). It carries out the reaction uridine(341) in tmRNA + S-adenosyl-L-methionine = 5-methyluridine(341) in tmRNA + S-adenosyl-L-homocysteine + H(+). Functionally, dual-specificity methyltransferase that catalyzes the formation of 5-methyluridine at position 54 (m5U54) in all tRNAs, and that of position 341 (m5U341) in tmRNA (transfer-mRNA). This chain is tRNA/tmRNA (uracil-C(5))-methyltransferase, found in Neisseria gonorrhoeae (strain ATCC 700825 / FA 1090).